The following is a 287-amino-acid chain: Nitrogenase iron protein (287 aa).

8–15 (GKGGIGKS) serves as a coordination point for ATP. [4Fe-4S] cluster is bound at residue cysteine 96. An ADP-ribosylarginine; by dinitrogenase reductase ADP-ribosyltransferase modification is found at arginine 99. Cysteine 130 is a binding site for [4Fe-4S] cluster.

The protein belongs to the NifH/BchL/ChlL family. Homodimer. [4Fe-4S] cluster is required as a cofactor. In terms of processing, the reversible ADP-ribosylation of Arg-99 inactivates the nitrogenase reductase and regulates nitrogenase activity.

The catalysed reaction is N2 + 8 reduced [2Fe-2S]-[ferredoxin] + 16 ATP + 16 H2O = H2 + 8 oxidized [2Fe-2S]-[ferredoxin] + 2 NH4(+) + 16 ADP + 16 phosphate + 6 H(+). Its function is as follows. The key enzymatic reactions in nitrogen fixation are catalyzed by the nitrogenase complex, which has 2 components: the iron protein and the molybdenum-iron protein. The polypeptide is Nitrogenase iron protein (Frankia casuarinae (strain DSM 45818 / CECT 9043 / HFP020203 / CcI3)).